The chain runs to 65 residues: uncharacterized protein (65 aa).

Helical transmembrane passes span 4–24 and 45–65; these read TIWLALALVLVLEGLGPMLYP and FGGGLVVAGVVVYYMLRKTIG.

Its subcellular location is the cell membrane. This is an uncharacterized protein from Escherichia coli O157:H7.